Consider the following 744-residue polypeptide: Leucine-rich repeat extensin-like protein 1 (744 aa).

Residues 1–26 form the signal peptide; it reads MLFPPLRSLFLFTLLLSSVCFLQIKA. N-linked (GlcNAc...) asparagine glycans are attached at residues Asn71 and Asn77. LRR repeat units lie at residues 122 to 145, 147 to 170, 171 to 194, 196 to 217, 219 to 240, 241 to 265, 266 to 289, 290 to 313, and 315 to 336; these read LSDLALFHINSNRFCGEVPLTFNR, KLLYELDLSNNRFVGKFPKVVLSL, PSLKFLDLRYNEFEGKIPSKLFDR, LDAIFLNHNRFRFGIPKNMGNS, VSALVLADNNLGGCIPGSIGQM, GKTLNELILSNDNLTGCLPPQIGNL, KKVTVFDITSNRLQGPLPSSVGNM, KSLEELHVANNAFTGVIPPSICQL, and NLENFTYSSNYFSGRPPICAAS. A glycan (N-linked (GlcNAc...) asparagine) is linked at Asn253. 2 N-linked (GlcNAc...) asparagine glycosylation sites follow: Asn318 and Asn344. An LRR 10 repeat occupies 381 to 404; sequence FSPPPPTFKMSPEVRTLPPPIYVY. The interval 382–744 is contains the Ser-Pro(4) repeats; sequence SPPPPTFKMS…ASPPPPPSYY (363 aa). 4 disordered regions span residues 408-445, 518-537, 555-576, and 658-744; these read PPPPSSKMSPTVRAYSPPPPPSSKMSPSVRAYSPPPPP, VYSSPPPPPPSPPPPCPESS, PSPVYYPPVTQSPPPPSPVYYP, and PPPS…PSYY. Residues 430-439 show a composition bias toward low complexity; it reads SKMSPSVRAY. A compositionally biased stretch (pro residues) spans 704-729; the sequence is YEPPPEYSYSSSPPPPSPTSYFPPMP.

Post-translationally, hydroxylated on proline residues in the S-P-P-P-P repeat. O-glycosylated on hydroxyprolines. In terms of tissue distribution, expressed in root hair cells (at protein level).

The protein resides in the secreted. The protein localises to the cell wall. Its function is as follows. Modulates cell morphogenesis by regulating cell wall formation and assembly, and/or growth polarization. Together with LRX2, component of the extracellular mechanism regulating root hair morphogenesis and elongation. The protein is Leucine-rich repeat extensin-like protein 1 (LRX1) of Arabidopsis thaliana (Mouse-ear cress).